A 493-amino-acid polypeptide reads, in one-letter code: Cytochrome c-552 (493 aa).

Positions 1–25 (MEKKLKSWQGWLLSGGSMVVVFVLG) are cleaved as a signal peptide. Histidine 116 is a heme c binding site. Cysteine 144, cysteine 147, and lysine 148 together coordinate heme. Residues cysteine 182, cysteine 185, histidine 186, cysteine 224, cysteine 227, and histidine 228 each coordinate heme c. Ca(2+)-binding residues include glutamate 230, tyrosine 231, lysine 276, and glutamine 278. Tyrosine 231 is a binding site for substrate. Histidine 279 provides a ligand contact to substrate. Residues histidine 290, cysteine 297, cysteine 300, histidine 301, histidine 315, cysteine 328, cysteine 331, histidine 332, and histidine 407 each contribute to the heme c site.

Belongs to the cytochrome c-552 family. Ca(2+) is required as a cofactor. The cofactor is heme c.

The protein resides in the periplasm. It carries out the reaction 6 Fe(III)-[cytochrome c] + NH4(+) + 2 H2O = 6 Fe(II)-[cytochrome c] + nitrite + 8 H(+). The protein operates within nitrogen metabolism; nitrate reduction (assimilation). In terms of biological role, catalyzes the reduction of nitrite to ammonia, consuming six electrons in the process. The sequence is that of Cytochrome c-552 from Bacteroides thetaiotaomicron (strain ATCC 29148 / DSM 2079 / JCM 5827 / CCUG 10774 / NCTC 10582 / VPI-5482 / E50).